The sequence spans 27 residues: NADH-ubiquinone oxidoreductase chain 1 (27 aa).

Residues 3–23 form a helical membrane-spanning segment; it reads LIFPLVGSLLLVICVMVGVAF.

It belongs to the complex I subunit 1 family.

It is found in the mitochondrion inner membrane. The enzyme catalyses a ubiquinone + NADH + 5 H(+)(in) = a ubiquinol + NAD(+) + 4 H(+)(out). Functionally, core subunit of the mitochondrial membrane respiratory chain NADH dehydrogenase (Complex I) that is believed to belong to the minimal assembly required for catalysis. Complex I functions in the transfer of electrons from NADH to the respiratory chain. The immediate electron acceptor for the enzyme is believed to be ubiquinone. This chain is NADH-ubiquinone oxidoreductase chain 1 (ND1), found in Simulium vittatum (Striped black fly).